The chain runs to 472 residues: Ribulose bisphosphate carboxylase large chain 1 (472 aa).

Positions 115 and 165 each coordinate substrate. Lysine 167 acts as the Proton acceptor in catalysis. Residue lysine 169 participates in substrate binding. 3 residues coordinate Mg(2+): lysine 193, aspartate 195, and glutamate 196. Position 193 is an N6-carboxylysine (lysine 193). Catalysis depends on histidine 286, which acts as the Proton acceptor. Positions 287, 319, and 371 each coordinate substrate.

This sequence belongs to the RuBisCO large chain family. Type I subfamily. As to quaternary structure, heterohexadecamer of 8 large chains and 8 small chains. It depends on Mg(2+) as a cofactor.

The catalysed reaction is 2 (2R)-3-phosphoglycerate + 2 H(+) = D-ribulose 1,5-bisphosphate + CO2 + H2O. It carries out the reaction D-ribulose 1,5-bisphosphate + O2 = 2-phosphoglycolate + (2R)-3-phosphoglycerate + 2 H(+). Its function is as follows. RuBisCO catalyzes two reactions: the carboxylation of D-ribulose 1,5-bisphosphate, the primary event in carbon dioxide fixation, as well as the oxidative fragmentation of the pentose substrate. Both reactions occur simultaneously and in competition at the same active site. The polypeptide is Ribulose bisphosphate carboxylase large chain 1 (Hydrogenovibrio marinus).